Reading from the N-terminus, the 402-residue chain is Arginine biosynthesis bifunctional protein ArgJ (402 aa).

Substrate contacts are provided by Thr-152, Lys-178, Thr-189, Glu-275, Asn-397, and Thr-402. Thr-189 acts as the Nucleophile in catalysis.

Belongs to the ArgJ family. Heterotetramer of two alpha and two beta chains.

It is found in the cytoplasm. The enzyme catalyses N(2)-acetyl-L-ornithine + L-glutamate = N-acetyl-L-glutamate + L-ornithine. The catalysed reaction is L-glutamate + acetyl-CoA = N-acetyl-L-glutamate + CoA + H(+). Its pathway is amino-acid biosynthesis; L-arginine biosynthesis; L-ornithine and N-acetyl-L-glutamate from L-glutamate and N(2)-acetyl-L-ornithine (cyclic): step 1/1. The protein operates within amino-acid biosynthesis; L-arginine biosynthesis; N(2)-acetyl-L-ornithine from L-glutamate: step 1/4. In terms of biological role, catalyzes two activities which are involved in the cyclic version of arginine biosynthesis: the synthesis of N-acetylglutamate from glutamate and acetyl-CoA as the acetyl donor, and of ornithine by transacetylation between N(2)-acetylornithine and glutamate. The protein is Arginine biosynthesis bifunctional protein ArgJ of Lactiplantibacillus plantarum (strain ATCC BAA-793 / NCIMB 8826 / WCFS1) (Lactobacillus plantarum).